The following is a 221-amino-acid chain: Oxaloacetate tautomerase oaa1, mitochondrial (221 aa).

Mg(2+) is bound by residues Glu59, Glu61, and Asp93.

Belongs to the FAH family. Mg(2+) is required as a cofactor. The cofactor is Mn(2+).

Its subcellular location is the mitochondrion. It localises to the cytoplasm. The catalysed reaction is oxaloacetate = enol-oxaloacetate. Its function is as follows. Tautomerase that converts enol-oxaloacetate, a strong inhibitor of succinate dehydrogenase, to the physiological keto form of oxaloacetate. The chain is Oxaloacetate tautomerase oaa1, mitochondrial from Schizosaccharomyces pombe (strain 972 / ATCC 24843) (Fission yeast).